A 202-amino-acid chain; its full sequence is Large ribosomal subunit protein bL25 (202 aa).

It belongs to the bacterial ribosomal protein bL25 family. CTC subfamily. As to quaternary structure, part of the 50S ribosomal subunit; part of the 5S rRNA/L5/L18/L25 subcomplex. Contacts the 5S rRNA. Binds to the 5S rRNA independently of L5 and L18.

This is one of the proteins that binds to the 5S RNA in the ribosome where it forms part of the central protuberance. The protein is Large ribosomal subunit protein bL25 of Clostridium perfringens (strain ATCC 13124 / DSM 756 / JCM 1290 / NCIMB 6125 / NCTC 8237 / Type A).